The primary structure comprises 330 residues: Phosphate acyltransferase (330 aa).

This sequence belongs to the PlsX family. Homodimer. Probably interacts with PlsY.

The protein localises to the cytoplasm. It carries out the reaction a fatty acyl-[ACP] + phosphate = an acyl phosphate + holo-[ACP]. Its pathway is lipid metabolism; phospholipid metabolism. In terms of biological role, catalyzes the reversible formation of acyl-phosphate (acyl-PO(4)) from acyl-[acyl-carrier-protein] (acyl-ACP). This enzyme utilizes acyl-ACP as fatty acyl donor, but not acyl-CoA. This is Phosphate acyltransferase from Streptococcus pneumoniae serotype 2 (strain D39 / NCTC 7466).